The chain runs to 378 residues: Opsin Rh4 (378 aa).

Residues 1 to 53 (MEPLCNASEPPLRPEARSSGNGDLQFLGWNVPPDQIQYIPEHWLTQLEPPASM) lie on the Extracellular side of the membrane. Asn-6 carries N-linked (GlcNAc...) asparagine glycosylation. A helical membrane pass occupies residues 54–78 (HYMLGVFYIFLFCASTVGNGMVIWI). Residues 79–90 (FSTSKSLRTPSN) are Cytoplasmic-facing. A helical membrane pass occupies residues 91–111 (MFVLNLAVFDLIMCLKAPIFI). Topologically, residues 112–127 (YNSFHRGFALGNTWCQ) are extracellular. Cys-126 and Cys-203 form a disulfide bridge. The helical transmembrane segment at 128-148 (IFASIGSYSGIGAGMTNAAIG) threads the bilayer. Topologically, residues 149–167 (YDRYNVITKPMNRNMTFTK) are cytoplasmic. A helical transmembrane segment spans residues 168–192 (AVIMNIIIWLYCTPWVVLPLTQFWD). At 193–216 (RFVPEGYLTSCSFDYLSDNFDTRL) the chain is on the extracellular side. A helical transmembrane segment spans residues 217-244 (FVGTIFFFSFVCPTLMILYYYSQIVGHV). Topologically, residues 245–280 (FSHEKALREQAKKMNVESLRSNVDKSKETAEIRIAK) are cytoplasmic. A helical membrane pass occupies residues 281 to 304 (AAITICFLFFVSWTPYGVMSLIGA). Topologically, residues 305-312 (FGDKSLLT) are extracellular. The helical transmembrane segment at 313-337 (PGATMIPACTCKLVACIDPFVYAIS) threads the bilayer. Lys-324 carries the N6-(retinylidene)lysine modification. Over 338–378 (HPRYRLELQKRCPWLGVNEKSGEISSAQSTTTQEQQQTTAA) the chain is Cytoplasmic.

It belongs to the G-protein coupled receptor 1 family. Opsin subfamily. In terms of processing, phosphorylated on some or all of the serine and threonine residues present in the C-terminal region.

The protein resides in the membrane. In terms of biological role, visual pigments are the light-absorbing molecules that mediate vision. They consist of an apoprotein, opsin, covalently linked to cis-retinal. The polypeptide is Opsin Rh4 (Rh4) (Drosophila melanogaster (Fruit fly)).